Here is a 432-residue protein sequence, read N- to C-terminus: Adenylosuccinate synthetase (432 aa).

GTP contacts are provided by residues 13 to 19 and 41 to 43; these read GDEGKGK and GHT. Asp-14 acts as the Proton acceptor in catalysis. Residues Asp-14 and Gly-41 each contribute to the Mg(2+) site. IMP-binding positions include 14 to 17, 39 to 42, Thr-130, Arg-144, Gln-225, Thr-240, and Arg-304; these read DEGK and NAGH. His-42 (proton donor) is an active-site residue. Substrate is bound at residue 300–306; that stretch reads AVTGRPR. GTP contacts are provided by residues Arg-306, 332 to 334, and 415 to 417; these read KLD and STG.

This sequence belongs to the adenylosuccinate synthetase family. As to quaternary structure, homodimer. Mg(2+) is required as a cofactor.

It localises to the cytoplasm. It catalyses the reaction IMP + L-aspartate + GTP = N(6)-(1,2-dicarboxyethyl)-AMP + GDP + phosphate + 2 H(+). Its pathway is purine metabolism; AMP biosynthesis via de novo pathway; AMP from IMP: step 1/2. In terms of biological role, plays an important role in the de novo pathway of purine nucleotide biosynthesis. Catalyzes the first committed step in the biosynthesis of AMP from IMP. This Haemophilus influenzae (strain PittEE) protein is Adenylosuccinate synthetase.